Reading from the N-terminus, the 223-residue chain is ATP phosphoribosyltransferase (223 aa).

Belongs to the ATP phosphoribosyltransferase family. Short subfamily. Heteromultimer composed of HisG and HisZ subunits.

It is found in the cytoplasm. It carries out the reaction 1-(5-phospho-beta-D-ribosyl)-ATP + diphosphate = 5-phospho-alpha-D-ribose 1-diphosphate + ATP. It participates in amino-acid biosynthesis; L-histidine biosynthesis; L-histidine from 5-phospho-alpha-D-ribose 1-diphosphate: step 1/9. Functionally, catalyzes the condensation of ATP and 5-phosphoribose 1-diphosphate to form N'-(5'-phosphoribosyl)-ATP (PR-ATP). Has a crucial role in the pathway because the rate of histidine biosynthesis seems to be controlled primarily by regulation of HisG enzymatic activity. The protein is ATP phosphoribosyltransferase of Novosphingobium aromaticivorans (strain ATCC 700278 / DSM 12444 / CCUG 56034 / CIP 105152 / NBRC 16084 / F199).